The chain runs to 188 residues: uncharacterized protein (188 aa).

The short motif at 62–77 (ITGEKPLIKLNESTEK) is the L5-specific motif element.

The protein localises to the mitochondrion. This is an uncharacterized protein from Dictyostelium discoideum (Social amoeba).